We begin with the raw amino-acid sequence, 573 residues long: Excitatory amino acid transporter 2 (573 aa).

A compositionally biased stretch (polar residues) spans 1 to 11 (MASTEGANNMP). A disordered region spans residues 1-29 (MASTEGANNMPKQVEVRMHDSHLSSEEPK). At 1 to 44 (MASTEGANNMPKQVEVRMHDSHLSSEEPKHRNLGMRMCDKLGKN) the chain is on the cytoplasmic side. Phosphoserine occurs at positions 3, 21, 24, and 25. Residues 14 to 29 (VEVRMHDSHLSSEEPK) show a composition bias toward basic and acidic residues. Residue cysteine 38 is the site of S-palmitoyl cysteine attachment. The next 3 membrane-spanning stretches (helical) occupy residues 45 to 64 (LLLS…GGLL), 88 to 108 (MLKM…LSGL), and 121 to 142 (MVYY…VLAI). N-linked (GlcNAc...) asparagine glycosylation is found at asparagine 205 and asparagine 215. 3 helical membrane-spanning segments follow: residues 235–258 (FKDG…MGKM), 268–295 (FFNI…ACLI), and 317–338 (ITVI…YFVV). Residues 344–374 (FSFFAGIFQAWITALGTASSAGTLPVTFRCL) constitute an intramembrane region (discontinuously helical). 361 to 363 (ASS) contributes to the L-aspartate binding site. A helical transmembrane segment spans residues 384–410 (VTRFVLPVGATINMDGTALYEAVAAIF). Residues glycine 392, threonine 394, and asparagine 396 each coordinate Na(+). L-aspartate-binding positions include threonine 400, 441-445 (IPSAG), aspartate 474, and asparagine 481. An intramembrane region (discontinuously helical) is located at residues 424-457 (IVTVSLTATLASIGAASIPSAGLVTMLLILTAVG). Residues 471 to 492 (WLLDRMRTSVNVVGDSFGAGIV) form a helical membrane-spanning segment. Na(+) contacts are provided by asparagine 481 and aspartate 485. 4 positions are modified to phosphoserine: serine 505, serine 520, serine 531, and serine 533. Position 538 is a phosphotyrosine (tyrosine 538). A phosphoserine mark is found at serine 543, serine 559, and serine 563.

It belongs to the dicarboxylate/amino acid:cation symporter (DAACS) (TC 2.A.23) family. SLC1A2 subfamily. Homotrimer. Interacts with AJUBA. In terms of processing, glycosylated. Palmitoylation at Cys-38 is not required for correct subcellular localization, but is important for glutamate uptake activity. In terms of tissue distribution, localized in brain and is highly enriched in the Purkinje cell layer in cerebellum.

The protein localises to the cell membrane. It carries out the reaction K(+)(in) + L-glutamate(out) + 3 Na(+)(out) + H(+)(out) = K(+)(out) + L-glutamate(in) + 3 Na(+)(in) + H(+)(in). It catalyses the reaction D-aspartate(out) + K(+)(in) + 3 Na(+)(out) + H(+)(out) = D-aspartate(in) + K(+)(out) + 3 Na(+)(in) + H(+)(in). The catalysed reaction is K(+)(in) + L-aspartate(out) + 3 Na(+)(out) + H(+)(out) = K(+)(out) + L-aspartate(in) + 3 Na(+)(in) + H(+)(in). Its function is as follows. Sodium-dependent, high-affinity amino acid transporter that mediates the uptake of L-glutamate and also L-aspartate and D-aspartate. Functions as a symporter that transports one amino acid molecule together with two or three Na(+) ions and one proton, in parallel with the counter-transport of one K(+) ion. Mediates Cl(-) flux that is not coupled to amino acid transport; this avoids the accumulation of negative charges due to aspartate and Na(+) symport. Essential for the rapid removal of released glutamate from the synaptic cleft, and for terminating the postsynaptic action of glutamate. This is Excitatory amino acid transporter 2 (Slc1a2) from Rattus norvegicus (Rat).